The following is a 538-amino-acid chain: Cytochrome P450 18a1 (538 aa).

The chain crosses the membrane as a helical span at residues Q24–V44. C466 contacts heme.

The protein belongs to the cytochrome P450 family. The cofactor is heme. Expressed in body wall (epidermal and muscle cells) and mid- and hind-gut.

Its subcellular location is the endoplasmic reticulum membrane. It localises to the microsome membrane. Functionally, probably involved in steroid hormones biosynthesis. This Drosophila melanogaster (Fruit fly) protein is Cytochrome P450 18a1 (Cyp18a1).